The following is a 468-amino-acid chain: ATP synthase subunit beta (468 aa).

Residue 155-162 participates in ATP binding; the sequence is GGAGVGKT.

This sequence belongs to the ATPase alpha/beta chains family. In terms of assembly, F-type ATPases have 2 components, CF(1) - the catalytic core - and CF(0) - the membrane proton channel. CF(1) has five subunits: alpha(3), beta(3), gamma(1), delta(1), epsilon(1). CF(0) has three main subunits: a(1), b(2) and c(9-12). The alpha and beta chains form an alternating ring which encloses part of the gamma chain. CF(1) is attached to CF(0) by a central stalk formed by the gamma and epsilon chains, while a peripheral stalk is formed by the delta and b chains.

It is found in the cell membrane. The enzyme catalyses ATP + H2O + 4 H(+)(in) = ADP + phosphate + 5 H(+)(out). Functionally, produces ATP from ADP in the presence of a proton gradient across the membrane. The catalytic sites are hosted primarily by the beta subunits. The polypeptide is ATP synthase subunit beta (Streptococcus pneumoniae (strain Taiwan19F-14)).